The sequence spans 261 residues: Vacuolar protein sorting-associated protein 37D (261 aa).

The region spanning 93-182 is the VPS37 C-terminal domain; the sequence is AENCADKLQR…RRRERSAQPA (90 aa). The segment at 172–261 is disordered; the sequence is LRRRERSAQP…RPSQPEPPHR (90 aa). Over residues 181–195 the composition is skewed to low complexity; it reads PAPTTAAAAAAAATA. Pro residues-rich tracts occupy residues 215–224 and 231–261; these read GPPPAVPRSL and PVPPVKGSPGCPFGPAPLLSPRPSQPEPPHR.

The protein belongs to the VPS37 family. Component of the ESCRT-I complex (endosomal sorting complex required for transport I) which consists of TSG101, VPS28, a VPS37 protein (VPS37A to -D) and MVB12A or MVB12B in a 1:1:1:1 stoichiometry. Interacts with TSG101 and MVB12A. Component of the ESCRT-I complex (endosomal sorting complex required for transport I) which consists of TSG101, VPS28, a VPS37 protein (VPS37A to -D) and UBAP1 in a 1:1:1:1 stoichiometry.

It is found in the late endosome membrane. Its function is as follows. Component of the ESCRT-I complex, a regulator of vesicular trafficking process. Required for the sorting of endocytic ubiquitinated cargos into multivesicular bodies. May be involved in cell growth and differentiation. The chain is Vacuolar protein sorting-associated protein 37D from Mus musculus (Mouse).